A 291-amino-acid chain; its full sequence is 2-C-methyl-D-erythritol 4-phosphate cytidylyltransferase (291 aa).

Residues 1–23 form a disordered region; the sequence is MTERDFDTPVETPTVQPAPAQGT.

It belongs to the IspD/TarI cytidylyltransferase family. IspD subfamily.

The catalysed reaction is 2-C-methyl-D-erythritol 4-phosphate + CTP + H(+) = 4-CDP-2-C-methyl-D-erythritol + diphosphate. The protein operates within isoprenoid biosynthesis; isopentenyl diphosphate biosynthesis via DXP pathway; isopentenyl diphosphate from 1-deoxy-D-xylulose 5-phosphate: step 2/6. Functionally, catalyzes the formation of 4-diphosphocytidyl-2-C-methyl-D-erythritol from CTP and 2-C-methyl-D-erythritol 4-phosphate (MEP). This Bifidobacterium longum subsp. infantis (strain ATCC 15697 / DSM 20088 / JCM 1222 / NCTC 11817 / S12) protein is 2-C-methyl-D-erythritol 4-phosphate cytidylyltransferase.